Here is a 283-residue protein sequence, read N- to C-terminus: Putative sugar uptake protein BC_0219 (283 aa).

10 helical membrane-spanning segments follow: residues L4 to V21, G26 to F48, A52 to G71, V84 to A106, W110 to F132, L151 to I173, A178 to S195, A208 to V230, F234 to G253, and Q260 to G279.

It belongs to the GRP transporter (TC 2.A.7.5) family.

The protein resides in the cell membrane. The polypeptide is Putative sugar uptake protein BC_0219 (Bacillus cereus (strain ATCC 14579 / DSM 31 / CCUG 7414 / JCM 2152 / NBRC 15305 / NCIMB 9373 / NCTC 2599 / NRRL B-3711)).